A 479-amino-acid chain; its full sequence is Probable xyloglucan galactosyltransferase GT15 (479 aa).

Residues 1-20 (MKNNNSSSVSIENHPWKKKP) are Cytoplasmic-facing. The chain crosses the membrane as a helical; Signal-anchor for type II membrane protein span at residues 21–40 (TTLLLFLSLLSISLLLLRLS). The Lumenal portion of the chain corresponds to 41–479 (QDKIILITTT…GIRRNEFKTD (439 aa)). N-linked (GlcNAc...) asparagine glycosylation is found at asparagine 155, asparagine 242, asparagine 285, and asparagine 391.

This sequence belongs to the glycosyltransferase 47 family. As to expression, expressed in roots, hypocotyls, cotyledons, leaves, stems and sepals.

It is found in the golgi apparatus membrane. In terms of biological role, functions in xyloglucan synthesis by adding side chains to the xylosylated glucan backbone. Involved in the galactosylation of hemicellulose xyloglucan. In Arabidopsis thaliana (Mouse-ear cress), this protein is Probable xyloglucan galactosyltransferase GT15.